The primary structure comprises 160 residues: SsrA-binding protein (160 aa).

This sequence belongs to the SmpB family.

The protein localises to the cytoplasm. Functionally, required for rescue of stalled ribosomes mediated by trans-translation. Binds to transfer-messenger RNA (tmRNA), required for stable association of tmRNA with ribosomes. tmRNA and SmpB together mimic tRNA shape, replacing the anticodon stem-loop with SmpB. tmRNA is encoded by the ssrA gene; the 2 termini fold to resemble tRNA(Ala) and it encodes a 'tag peptide', a short internal open reading frame. During trans-translation Ala-aminoacylated tmRNA acts like a tRNA, entering the A-site of stalled ribosomes, displacing the stalled mRNA. The ribosome then switches to translate the ORF on the tmRNA; the nascent peptide is terminated with the 'tag peptide' encoded by the tmRNA and targeted for degradation. The ribosome is freed to recommence translation, which seems to be the essential function of trans-translation. This Shewanella amazonensis (strain ATCC BAA-1098 / SB2B) protein is SsrA-binding protein.